The sequence spans 281 residues: 2,3,4,5-tetrahydropyridine-2,6-dicarboxylate N-succinyltransferase (281 aa).

The substrate site is built by Arg-108 and Asp-145.

Belongs to the transferase hexapeptide repeat family. Homotrimer.

It is found in the cytoplasm. The enzyme catalyses (S)-2,3,4,5-tetrahydrodipicolinate + succinyl-CoA + H2O = (S)-2-succinylamino-6-oxoheptanedioate + CoA. Its pathway is amino-acid biosynthesis; L-lysine biosynthesis via DAP pathway; LL-2,6-diaminopimelate from (S)-tetrahydrodipicolinate (succinylase route): step 1/3. The sequence is that of 2,3,4,5-tetrahydropyridine-2,6-dicarboxylate N-succinyltransferase from Parvibaculum lavamentivorans (strain DS-1 / DSM 13023 / NCIMB 13966).